Consider the following 505-residue polypeptide: RNA-splicing ligase RtcB homolog (505 aa).

Residues D119, C122, H227, H259, and H353 each contribute to the Mn(2+) site. 226 to 230 contributes to the GMP binding site; the sequence is NHYAE. Residues 353–354, 402–405, S409, 428–431, and K504 each bind GMP; these read HN, GGSM, and HGAG. H428 acts as the GMP-histidine intermediate in catalysis.

It belongs to the RtcB family. As to quaternary structure, catalytic component of the tRNA-splicing ligase complex. It depends on Mn(2+) as a cofactor.

The protein localises to the nucleus. Its subcellular location is the cytoplasm. The enzyme catalyses a 3'-end 3'-phospho-ribonucleotide-RNA + a 5'-end dephospho-ribonucleoside-RNA + GTP = a ribonucleotidyl-ribonucleotide-RNA + GMP + diphosphate. It catalyses the reaction a 3'-end 2',3'-cyclophospho-ribonucleotide-RNA + a 5'-end dephospho-ribonucleoside-RNA + GTP + H2O = a ribonucleotidyl-ribonucleotide-RNA + GMP + diphosphate + H(+). Functionally, catalytic subunit of the tRNA-splicing ligase complex that acts by directly joining spliced tRNA halves to mature-sized tRNAs. Required for the ligation of mRNAs and specifically, regulates xbp-1 mRNA splicing during the endoplasmic reticulum stress-induced unfolded protein response. Has a neuroprotective role in the age-dependent degeneration of dopamine neurons, which is mediated by xbp-1. This is RNA-splicing ligase RtcB homolog from Caenorhabditis elegans.